Consider the following 255-residue polypeptide: UPF0246 protein Caul_4480 (255 aa).

This sequence belongs to the UPF0246 family.

In Caulobacter sp. (strain K31), this protein is UPF0246 protein Caul_4480.